A 350-amino-acid chain; its full sequence is Holliday junction branch migration complex subunit RuvB (350 aa).

Residues Met-1 to Tyr-183 form a large ATPase domain (RuvB-L) region. Residues Leu-22, Arg-23, Gly-64, Lys-67, Thr-68, Ser-69, Glu-130–Phe-132, Arg-173, Tyr-183, and Arg-220 contribute to the ATP site. Residue Thr-68 participates in Mg(2+) binding. Residues Ser-184–Glu-254 form a small ATPAse domain (RuvB-S) region. Residues Glu-257–Phe-350 are head domain (RuvB-H). Positions 312 and 317 each coordinate DNA.

This sequence belongs to the RuvB family. In terms of assembly, homohexamer. Forms an RuvA(8)-RuvB(12)-Holliday junction (HJ) complex. HJ DNA is sandwiched between 2 RuvA tetramers; dsDNA enters through RuvA and exits via RuvB. An RuvB hexamer assembles on each DNA strand where it exits the tetramer. Each RuvB hexamer is contacted by two RuvA subunits (via domain III) on 2 adjacent RuvB subunits; this complex drives branch migration. In the full resolvosome a probable DNA-RuvA(4)-RuvB(12)-RuvC(2) complex forms which resolves the HJ.

It is found in the cytoplasm. It catalyses the reaction ATP + H2O = ADP + phosphate + H(+). Functionally, the RuvA-RuvB-RuvC complex processes Holliday junction (HJ) DNA during genetic recombination and DNA repair, while the RuvA-RuvB complex plays an important role in the rescue of blocked DNA replication forks via replication fork reversal (RFR). RuvA specifically binds to HJ cruciform DNA, conferring on it an open structure. The RuvB hexamer acts as an ATP-dependent pump, pulling dsDNA into and through the RuvAB complex. RuvB forms 2 homohexamers on either side of HJ DNA bound by 1 or 2 RuvA tetramers; 4 subunits per hexamer contact DNA at a time. Coordinated motions by a converter formed by DNA-disengaged RuvB subunits stimulates ATP hydrolysis and nucleotide exchange. Immobilization of the converter enables RuvB to convert the ATP-contained energy into a lever motion, pulling 2 nucleotides of DNA out of the RuvA tetramer per ATP hydrolyzed, thus driving DNA branch migration. The RuvB motors rotate together with the DNA substrate, which together with the progressing nucleotide cycle form the mechanistic basis for DNA recombination by continuous HJ branch migration. Branch migration allows RuvC to scan DNA until it finds its consensus sequence, where it cleaves and resolves cruciform DNA. The chain is Holliday junction branch migration complex subunit RuvB from Chloroflexus aggregans (strain MD-66 / DSM 9485).